We begin with the raw amino-acid sequence, 338 residues long: Probable tRNA pseudouridine synthase B (338 aa).

Asp78 (nucleophile) is an active-site residue. The region spanning 245-320 is the PUA domain; the sequence is LPKIILRDSA…IAASPIRVLM (76 aa).

The protein belongs to the pseudouridine synthase TruB family. Type 2 subfamily.

The catalysed reaction is uridine(55) in tRNA = pseudouridine(55) in tRNA. Functionally, could be responsible for synthesis of pseudouridine from uracil-55 in the psi GC loop of transfer RNAs. This is Probable tRNA pseudouridine synthase B from Methanosarcina mazei (strain ATCC BAA-159 / DSM 3647 / Goe1 / Go1 / JCM 11833 / OCM 88) (Methanosarcina frisia).